A 415-amino-acid polypeptide reads, in one-letter code: Tyrosine--tRNA ligase (415 aa).

An L-tyrosine-binding site is contributed by Tyr34. The 'HIGH' region motif lies at 39-48 (PSADSLHLGN). L-tyrosine contacts are provided by Tyr162 and Gln166. The 'KMSKS' region motif lies at 224–228 (KFGKS). ATP is bound at residue Lys227. The S4 RNA-binding domain maps to 346–413 (IKIIDLLNLA…KRNYFLIVWN (68 aa)).

It belongs to the class-I aminoacyl-tRNA synthetase family. TyrS type 1 subfamily. Homodimer.

The protein localises to the cytoplasm. It carries out the reaction tRNA(Tyr) + L-tyrosine + ATP = L-tyrosyl-tRNA(Tyr) + AMP + diphosphate + H(+). Its function is as follows. Catalyzes the attachment of tyrosine to tRNA(Tyr) in a two-step reaction: tyrosine is first activated by ATP to form Tyr-AMP and then transferred to the acceptor end of tRNA(Tyr). This Ureaplasma urealyticum serovar 10 (strain ATCC 33699 / Western) protein is Tyrosine--tRNA ligase.